Reading from the N-terminus, the 549-residue chain is Urocanate hydratase (549 aa).

NAD(+) contacts are provided by residues 46 to 47 (GG), Q124, 170 to 172 (GMG), E190, R195, 236 to 237 (NA), 257 to 261 (QTSAH), 267 to 268 (YV), and Y316. Residue C404 is part of the active site. G486 provides a ligand contact to NAD(+).

This sequence belongs to the urocanase family. It depends on NAD(+) as a cofactor.

The protein resides in the cytoplasm. The enzyme catalyses 4-imidazolone-5-propanoate = trans-urocanate + H2O. The protein operates within amino-acid degradation; L-histidine degradation into L-glutamate; N-formimidoyl-L-glutamate from L-histidine: step 2/3. Catalyzes the conversion of urocanate to 4-imidazolone-5-propionate. In Natranaerobius thermophilus (strain ATCC BAA-1301 / DSM 18059 / JW/NM-WN-LF), this protein is Urocanate hydratase.